A 218-amino-acid polypeptide reads, in one-letter code: Capsid protein (218 aa).

M1 bears the N-acetylmethionine; by host mark. The span at 1 to 10 (MDKSESTSAG) shows a compositional bias: low complexity. The tract at residues 1–29 (MDKSESTSAGRNRRRRPRRGSRSASSSAD) is disordered. Residues 11 to 21 (RNRRRRPRRGS) are compositionally biased toward basic residues.

The protein belongs to the cucumovirus capsid protein family.

The protein localises to the virion. Its function is as follows. Capsid protein. Probably binds RNA and plays a role in packaging. The polypeptide is Capsid protein (Cucumis sativus (Cucumber)).